A 132-amino-acid chain; its full sequence is Small ribosomal subunit protein uS8 (132 aa).

The protein belongs to the universal ribosomal protein uS8 family. As to quaternary structure, part of the 30S ribosomal subunit. Contacts proteins S5 and S12.

Functionally, one of the primary rRNA binding proteins, it binds directly to 16S rRNA central domain where it helps coordinate assembly of the platform of the 30S subunit. This chain is Small ribosomal subunit protein uS8, found in Corynebacterium kroppenstedtii (strain DSM 44385 / JCM 11950 / CIP 105744 / CCUG 35717).